We begin with the raw amino-acid sequence, 355 residues long: Probable aldo-keto reductase 3 (355 aa).

Y70 serves as the catalytic Proton donor. H138 lines the substrate pocket. NADP(+) is bound at residue 217–227 (SPLGRGFFSSG).

The protein belongs to the aldo/keto reductase family.

This Oryza sativa subsp. japonica (Rice) protein is Probable aldo-keto reductase 3.